A 303-amino-acid chain; its full sequence is Polyisoprenyl-teichoic acid--peptidoglycan teichoic acid transferase TagU (303 aa).

Over Met-1 to Lys-6 the chain is Cytoplasmic. A helical; Signal-anchor for type II membrane protein transmembrane segment spans residues Ile-7–Ala-27. Topologically, residues Lys-28–Lys-303 are extracellular.

Belongs to the LytR/CpsA/Psr (LCP) family.

The protein localises to the cell membrane. The protein operates within cell wall biogenesis. Its function is as follows. May catalyze the final step in cell wall teichoic acid biosynthesis, the transfer of the anionic cell wall polymers (APs) from their lipid-linked precursor to the cell wall peptidoglycan (PG). The protein is Polyisoprenyl-teichoic acid--peptidoglycan teichoic acid transferase TagU of Enterococcus faecalis (strain ATCC 700802 / V583).